A 427-amino-acid polypeptide reads, in one-letter code: UDP-N-acetyl-D-mannosamine dehydrogenase (427 aa).

Residues Tyr19, Ile20, Asp39, Arg44, Thr91, and Thr130 each contribute to the NAD(+) site. UDP-N-acetyl-alpha-D-mannosaminouronate is bound by residues Arg155, Val156, Lys207, Asn211, Arg214, His245, Arg247, and Gly258. Lys207 functions as the Proton donor/acceptor in the catalytic mechanism. The active-site Nucleophile is the Cys261. UDP-N-acetyl-alpha-D-mannosaminouronate is bound by residues Tyr318 and Lys319. Arg326 contributes to the NAD(+) binding site. Lys404 is a binding site for UDP-N-acetyl-alpha-D-mannosaminouronate.

This sequence belongs to the UDP-glucose/GDP-mannose dehydrogenase family. As to quaternary structure, homotetramer; probably dimer of dimers.

The enzyme catalyses UDP-N-acetyl-alpha-D-mannosamine + 2 NAD(+) + H2O = UDP-N-acetyl-alpha-D-mannosaminouronate + 2 NADH + 3 H(+). Its function is as follows. Catalyzes the four-electron oxidation of UDP-N-acetyl-D-mannosamine (UDP-ManNAc), reducing NAD(+) and releasing UDP-N-acetylmannosaminuronic acid (UDP-ManNAcA). The chain is UDP-N-acetyl-D-mannosamine dehydrogenase (wecC) from Methanococcus vannielii (strain ATCC 35089 / DSM 1224 / JCM 13029 / OCM 148 / SB).